The primary structure comprises 157 residues: uncharacterized protein (157 aa).

This is an uncharacterized protein from Pseudoalteromonas espejiana (Bacteriophage PM2).